A 168-amino-acid polypeptide reads, in one-letter code: Large ribosomal subunit protein uL10 (168 aa).

This sequence belongs to the universal ribosomal protein uL10 family. In terms of assembly, part of the ribosomal stalk of the 50S ribosomal subunit. The N-terminus interacts with L11 and the large rRNA to form the base of the stalk. The C-terminus forms an elongated spine to which L12 dimers bind in a sequential fashion forming a multimeric L10(L12)X complex.

Forms part of the ribosomal stalk, playing a central role in the interaction of the ribosome with GTP-bound translation factors. The protein is Large ribosomal subunit protein uL10 of Paracidovorax citrulli (strain AAC00-1) (Acidovorax citrulli).